A 460-amino-acid chain; its full sequence is MVKEYKTITQIAGPLVFVEKTEPVGYKEIVTINMPDGTTRRGEVLDSSSDIVVIQIFEGTTGLDKECGVVFTGETLKLPASIDLLGRILSGSGEPLDGGPRIVPDQLLDINGAAMNPYARLPPKDFIQTGISTIDGTNTLVRGQKLPIFSASGLPHNEIALQIARQAAVPGSESAFAVVFAAMGITNEEAQYFMSDFEKTGALERAVVFLNLADDPAVERIVTPRMALTAAEYLAYEHGMHVLVILTDITNYAEALRQMGAARNEIPGRRGYPGYMYTDLATLYERAGIVKGAKGSVTQIPILSMPGDDITHPIPDLSGYITEGQIVVSRELHRKGIYPPINVLPSLSRLMNSGIGADKTREDHKAVSDQMYAGYAEGRDLRGLVAIVGKEALSERDVKFLEFADLFEDQFVRQGRNENRTIADTLDIGWKILAHLPENQLGRIDNKYIQKYHPAHRKGQ.

Belongs to the ATPase alpha/beta chains family. As to quaternary structure, has multiple subunits with at least A(3), B(3), C, D, E, F, H, I and proteolipid K(x).

The protein resides in the cell membrane. Its function is as follows. Component of the A-type ATP synthase that produces ATP from ADP in the presence of a proton gradient across the membrane. The B chain is a regulatory subunit. The protein is A-type ATP synthase subunit B of Methanosarcina barkeri (strain Fusaro / DSM 804).